The primary structure comprises 248 residues: Ribosomal RNA small subunit methyltransferase J (248 aa).

S-adenosyl-L-methionine contacts are provided by residues 101 to 102, 117 to 118, 153 to 154, and Asp171; these read RD, ER, and SS.

Belongs to the methyltransferase superfamily. RsmJ family.

It localises to the cytoplasm. The enzyme catalyses guanosine(1516) in 16S rRNA + S-adenosyl-L-methionine = N(2)-methylguanosine(1516) in 16S rRNA + S-adenosyl-L-homocysteine + H(+). Functionally, specifically methylates the guanosine in position 1516 of 16S rRNA. The polypeptide is Ribosomal RNA small subunit methyltransferase J (Pectobacterium atrosepticum (strain SCRI 1043 / ATCC BAA-672) (Erwinia carotovora subsp. atroseptica)).